The following is a 1383-amino-acid chain: Negative regulator of sporulation MDS3 (1383 aa).

Kelch repeat units follow at residues 124–179 (CLYL…SPRF), 199–246 (GLFI…KDKE), and 356–402 (QNVV…WGGF). The span at 450–460 (GRSNNRTSSFV) shows a compositional bias: polar residues. Disordered regions lie at residues 450–506 (GRSN…VLDA), 625–644 (NQRLRSKSSNSESSSSDIPK), 653–825 (LLSS…DLFS), 858–884 (LDSFSSGKSSMAKVSSVPGENPDSDES), 1063–1114 (NNSR…VDKE), 1251–1289 (QLKESQLQSKSSPIIPTVSTVTPSPLPSISGVPSPRLPQ), and 1321–1369 (SMTD…KSSS). Residues 631–644 (KSSNSESSSSDIPK) are compositionally biased toward low complexity. Basic and acidic residues predominate over residues 693–707 (VNREEGSDCSKDRKT). Composition is skewed to low complexity over residues 726 to 758 (NSTSSFQSNSSSLLTSHLQDIPPQLPLPDEQIP), 803 to 815 (ESPFSSPRPSMSG), and 858 to 874 (LDSFSSGKSSMAKVSSV). A compositionally biased stretch (basic and acidic residues) spans 1084–1094 (EGEKQEEIVSK). Over residues 1251–1280 (QLKESQLQSKSSPIIPTVSTVTPSPLPSIS) the composition is skewed to low complexity. Polar residues predominate over residues 1341–1352 (LQQTMLSRTPTN).

As to quaternary structure, interacts with SIT4.

The protein localises to the cytoplasm. Functionally, negatively regulates early sporulation-specific genes. TOR signaling pathway component that contributes to morphogenesis as a regulator of this key morphogenetic pathway. Required for growth and hyphal formation at pH 9, for full virulence in a mouse model of systemic infection and for biofilm formation. Involved in chlamydospore formation, distinctive morphological feature of the fungal pathogen C.albicans that can be induced to form in oxygen-limited environments and has been reported in clinical specimens. The chain is Negative regulator of sporulation MDS3 (MDS3) from Candida albicans (strain SC5314 / ATCC MYA-2876) (Yeast).